The primary structure comprises 242 residues: Putative serine/threonine-protein kinase (242 aa).

Positions 49–242 (FSSKNKVGEG…KSDVYSFGVL (194 aa)) constitute a Protein kinase domain. ATP-binding positions include 55 to 63 (VGEGGCGAV) and lysine 77. The Proton acceptor role is filled by aspartate 177.

Belongs to the protein kinase superfamily. Ser/Thr protein kinase family.

The enzyme catalyses L-seryl-[protein] + ATP = O-phospho-L-seryl-[protein] + ADP + H(+). It carries out the reaction L-threonyl-[protein] + ATP = O-phospho-L-threonyl-[protein] + ADP + H(+). This chain is Putative serine/threonine-protein kinase, found in Helianthus annuus (Common sunflower).